A 917-amino-acid chain; its full sequence is Nitrate reductase [NADH] 1 (917 aa).

A disordered region spans residues 62 to 81; it reads DSYDDSSSDDEDESHNRNVP. Residues 63–74 are compositionally biased toward acidic residues; that stretch reads SYDDSSSDDEDE. Mo-molybdopterin is bound at residue Cys-197. The Cytochrome b5 heme-binding domain maps to 545 to 620; sequence SKMYSISEVR…LEDYRIGELI (76 aa). Heme contacts are provided by His-580 and His-603. The FAD-binding FR-type domain maps to 660–772; it reads REKIPVRLIE…KGPLGHIEYK (113 aa). FAD contacts are provided by residues 712–715, 729–733, Phe-734, Phe-741, 746–748, and Thr-799; these read RAYT, VVKVY, and LMS.

The protein belongs to the nitrate reductase family. As to quaternary structure, homodimer. It depends on FAD as a cofactor. The cofactor is heme. Mo-molybdopterin is required as a cofactor. As to expression, root, leaf, and shoot.

The catalysed reaction is nitrite + NAD(+) + H2O = nitrate + NADH + H(+). Functionally, nitrate reductase is a key enzyme involved in the first step of nitrate assimilation in plants, fungi and bacteria. The polypeptide is Nitrate reductase [NADH] 1 (NIA1) (Arabidopsis thaliana (Mouse-ear cress)).